Reading from the N-terminus, the 326-residue chain is Vitamin B12 import system permease protein BtuC (326 aa).

9 helical membrane passes run 15-35 (WLLC…CAGE), 61-81 (LAVL…QALF), 88-108 (PGLL…VLLG), 112-132 (LPNW…TLIL), 146-166 (LLAG…AIYF), 184-204 (GGVD…LLWI), 240-260 (GWMV…GLVI), 274-294 (VLLP…DVVA), and 302-322 (ELPI…WLLL).

The protein belongs to the binding-protein-dependent transport system permease family. FecCD subfamily. As to quaternary structure, the complex is composed of two ATP-binding proteins (BtuD), two transmembrane proteins (BtuC) and a solute-binding protein (BtuF).

It is found in the cell inner membrane. Functionally, part of the ABC transporter complex BtuCDF involved in vitamin B12 import. Involved in the translocation of the substrate across the membrane. This is Vitamin B12 import system permease protein BtuC from Escherichia coli O8 (strain IAI1).